Consider the following 361-residue polypeptide: Prostaglandin E2 receptor EP2 subtype (361 aa).

Positions 1 to 10 (MGSISNNSGS) are enriched in polar residues. A disordered region spans residues 1–21 (MGSISNNSGSEDCESREWLPS). At 1–23 (MGSISNNSGSEDCESREWLPSGE) the chain is on the extracellular side. Asparagine 6 is a glycosylation site (N-linked (GlcNAc...) asparagine). The helical transmembrane segment at 24–47 (SPAISSAMFSAGVLGNLIALALLA) threads the bilayer. Over 48 to 65 (RRWRGDAGRRAGRGNSIS) the chain is Cytoplasmic. Residues 66-91 (LFHVLVTELVFTDLLGTCLISPVVLA) form a helical membrane-spanning segment. Residues 92-111 (SYARNQTLMALEPERRACTY) lie on the Extracellular side of the membrane. Asparagine 96 is a glycosylation site (N-linked (GlcNAc...) asparagine). An intrachain disulfide couples cysteine 109 to cysteine 187. Residues 112-132 (FAFAMTFFSLATMLMLFAMAL) traverse the membrane as a helical segment. Residues 133-151 (ERYLSIGRPYFYQRHVTRR) are Cytoplasmic-facing. A helical membrane pass occupies residues 152 to 176 (GGLAVLPTIYTVSLLFCSLPLLGYG). At 177–198 (QYVQYCPGTWCFIRHGRTAYLQ) the chain is on the extracellular side. Residues 199–223 (LYATLLLLLIVAVLACNFSVILNLI) form a helical membrane-spanning segment. Residues 224 to 262 (RMHRRSGRSRCGPSLGSCRDGSGTRRRGERVSVAEETDH) lie on the Cytoplasmic side of the membrane. Positions 230-253 (GRSRCGPSLGSCRDGSGTRRRGER) are disordered. Residues 263 to 286 (LILLAIMTITFAICSLPFTIFAYM) form a helical membrane-spanning segment. An N-linked (GlcNAc...) asparagine glycan is attached at asparagine 287. The Extracellular segment spans residues 287 to 299 (NETSSRREKWDLQ). Residues 300 to 323 (ALRFLSINSIIDPWVFAIFRPPVL) form a helical membrane-spanning segment. At 324-361 (RLMRSVLCCRVSLRAQDATQTSCSIQSNASRLTFVDTS) the chain is on the cytoplasmic side.

It belongs to the G-protein coupled receptor 1 family.

It is found in the cell membrane. Its function is as follows. Receptor for prostaglandin E2 (PGE2). The activity of this receptor is mediated by G(s) proteins that stimulate adenylate cyclase. The subsequent raise in intracellular cAMP is responsible for the relaxing effect of this receptor on smooth muscle. This chain is Prostaglandin E2 receptor EP2 subtype (PTGER2), found in Canis lupus familiaris (Dog).